A 585-amino-acid chain; its full sequence is Protein FAM151A (585 aa).

Residues 14–34 traverse the membrane as a helical segment; that stretch reads WVFASITCVSAVAIAAIVLAI.

The protein belongs to the menorin family.

Its subcellular location is the membrane. This is Protein FAM151A (FAM151A) from Pongo abelii (Sumatran orangutan).